The sequence spans 360 residues: Mannonate dehydratase (360 aa).

Belongs to the mannonate dehydratase family. Fe(2+) serves as cofactor. It depends on Mn(2+) as a cofactor.

It carries out the reaction D-mannonate = 2-dehydro-3-deoxy-D-gluconate + H2O. It functions in the pathway carbohydrate metabolism; pentose and glucuronate interconversion. Functionally, catalyzes the dehydration of D-mannonate. The chain is Mannonate dehydratase (uxuA) from Thermotoga neapolitana.